The primary structure comprises 259 residues: Putative hydro-lyase Bphyt_4813 (259 aa).

Belongs to the D-glutamate cyclase family.

The polypeptide is Putative hydro-lyase Bphyt_4813 (Paraburkholderia phytofirmans (strain DSM 17436 / LMG 22146 / PsJN) (Burkholderia phytofirmans)).